The chain runs to 125 residues: Large ribosomal subunit protein bL12 (125 aa).

Belongs to the bacterial ribosomal protein bL12 family. Homodimer. Part of the ribosomal stalk of the 50S ribosomal subunit. Forms a multimeric L10(L12)X complex, where L10 forms an elongated spine to which 2 to 4 L12 dimers bind in a sequential fashion. Binds GTP-bound translation factors.

Its function is as follows. Forms part of the ribosomal stalk which helps the ribosome interact with GTP-bound translation factors. Is thus essential for accurate translation. This is Large ribosomal subunit protein bL12 from Campylobacter lari (strain RM2100 / D67 / ATCC BAA-1060).